A 615-amino-acid chain; its full sequence is Putative binding protein BruAb2_0648 (615 aa).

Positions 1–29 (MLNRFIAFFRSVFLIGLVATAFGALPARA) are cleaved as a signal peptide.

Belongs to the bacterial solute-binding protein 5 family.

Its subcellular location is the periplasm. This chain is Putative binding protein BruAb2_0648, found in Brucella abortus biovar 1 (strain 9-941).